The following is a 21-amino-acid chain: Peptide PGLa-B2 (21 aa).

Leucine amide is present on Leu21.

In terms of tissue distribution, expressed by the skin glands.

The protein localises to the secreted. Its function is as follows. Has antimicrobial activity against Gram-negative bacterium E.coli ATCC 25922 (MIC=25 uM), Gram-positive bacterium S.auerus ATCC 25923 (MIC=50 uM) and against fungus C.albicans ATCC 90028 (MIC=25 uM). Has some hemolytic activity against human erythrocytes at high concentration. This Xenopus borealis (Kenyan clawed frog) protein is Peptide PGLa-B2.